The sequence spans 237 residues: DNA replication inhibitor toxin SocB (237 aa).

Interacts with cognate antitoxin SocA and with beta sliding clamp (dnaN). In terms of processing, degraded by ClpXP, recognition of SocB by ClpX requires SocA.

It localises to the cytoplasm. Its function is as follows. Toxic component of an atypical type II toxin-antitoxin (TA) system. Upon overexpression in the absence of its cognate antitoxin SocA, leads to inhibition of colony formation, cellular filamentation, incomplete DNA replication and induction of the SOS response. Exercises toxicity by binding the beta sliding clamp (dnaN), blocking DNA replication and leading to premature replication fork collapse and incomplete cell division. Unlike most type II TA systems, the SocB toxin is unstable and targeted by its cognate antitoxin SocA for degradation by ClpXP. Not toxic upon expression in E.coli. This is DNA replication inhibitor toxin SocB from Caulobacter vibrioides (strain NA1000 / CB15N) (Caulobacter crescentus).